The primary structure comprises 442 residues: Glutamate-1-semialdehyde 2,1-aminomutase (442 aa).

K282 carries the post-translational modification N6-(pyridoxal phosphate)lysine.

This sequence belongs to the class-III pyridoxal-phosphate-dependent aminotransferase family. HemL subfamily. In terms of assembly, homodimer. Pyridoxal 5'-phosphate serves as cofactor.

The protein resides in the cytoplasm. It carries out the reaction (S)-4-amino-5-oxopentanoate = 5-aminolevulinate. The protein operates within porphyrin-containing compound metabolism; protoporphyrin-IX biosynthesis; 5-aminolevulinate from L-glutamyl-tRNA(Glu): step 2/2. This is Glutamate-1-semialdehyde 2,1-aminomutase from Polaromonas sp. (strain JS666 / ATCC BAA-500).